Consider the following 1069-residue polypeptide: Protogenin B (1069 aa).

The signal sequence occupies residues 1–26 (MGSVRWKTHQQWLIIFWILSFSGVFG). Residues 27 to 936 (FSELWFSIEP…LYHIDEKSMS (910 aa)) are Extracellular-facing. 4 consecutive Ig-like domains span residues 30–117 (LWFS…ARLT), 122–208 (LVFS…AELV), 221–308 (PLII…GNVT), and 312–396 (PSLV…SRLI). 2 disulfides stabilise this stretch: Cys51-Cys100 and Cys143-Cys191. Residues Asn81, Asn88, Asn180, and Asn229 are each glycosylated (N-linked (GlcNAc...) asparagine). A disulfide bond links Cys242 and Cys290. N-linked (GlcNAc...) asparagine glycosylation is found at Asn299 and Asn306. The segment at 317-336 (KPESQTRPRAGTARFSCQAE) is disordered. A disulfide bridge links Cys333 with Cys380. Fibronectin type-III domains follow at residues 406 to 500 (APRN…TLED), 502 to 601 (PLRT…TPKT), 608 to 701 (PAPN…CPST), 711 to 804 (PPDH…TLLE), and 809 to 904 (PPES…VKGK). Asn458, Asn473, and Asn560 each carry an N-linked (GlcNAc...) asparagine glycan. Over residues 590–605 (PSAWSSHRTPKTSSAT) the composition is skewed to polar residues. The tract at residues 590–609 (PSAWSSHRTPKTSSATVPPA) is disordered. N-linked (GlcNAc...) asparagine glycans are attached at residues Asn618, Asn720, and Asn834. A helical membrane pass occupies residues 937-957 (GIIVGVCIALSCIILCIFILL). Residues 958–1069 (SKTQTQKSAS…KTVLCYEDEA (112 aa)) are Cytoplasmic-facing.

Belongs to the immunoglobulin superfamily. DCC family. As to expression, initially expressed in the ventral forebrain and ventral spinal cord. Later, also expressed in the midbrain and in parts of the diencephalon and hindbrain.

The protein resides in the membrane. Functionally, may play a role in anteroposterior axis elongation. In Danio rerio (Zebrafish), this protein is Protogenin B.